Here is a 196-residue protein sequence, read N- to C-terminus: Hypoxanthine/guanine phosphoribosyltransferase (196 aa).

The protein belongs to the purine/pyrimidine phosphoribosyltransferase family. Archaeal HPRT subfamily. In terms of assembly, homodimer.

The protein localises to the cytoplasm. The enzyme catalyses IMP + diphosphate = hypoxanthine + 5-phospho-alpha-D-ribose 1-diphosphate. It carries out the reaction GMP + diphosphate = guanine + 5-phospho-alpha-D-ribose 1-diphosphate. Its pathway is purine metabolism; IMP biosynthesis via salvage pathway; IMP from hypoxanthine: step 1/1. Its function is as follows. Catalyzes a salvage reaction resulting in the formation of IMP that is energically less costly than de novo synthesis. The chain is Hypoxanthine/guanine phosphoribosyltransferase from Methanocaldococcus sp. (strain FS406-22).